The chain runs to 914 residues: MMPSQITRSSHSSLPEVAPASGDAAGVSEQTPQQARTVAFFASGELAVAFGRTSTAPAQDSVRLLSALQRELDKQQPSWPTVAQLCHSLAEVAKTEQGWHQLASEDQAPAPALKDLLERCIGRLADMPASHASHDSLSLACEGLRTARLHQSVARLTARPPALARAIPDLLALTHLDPETLGAEPPVVSSYTLFSHFVHTAKQRTAELNDSLQRQPEAVVSLLRSHADTLNDLETLPGALQALTENCQDAPACNELRELAEVVGALLQLLREHGILPRLEAISIEPGEAPAPGHEAAEPRLTRSQALLKAGGNLVRKFDAYGALAPMDDKGLLALMRTPAPHLSPDQMHAFLNKHVLHLTQEQRDIVSNTPLPFAPEGDIEARCGMGFDEKLRLALANGSLVLSEEQLARLGHLPSAATTTSDVVKTLLEKPSSALSEAERDMLGAIVQANGQGQLDAWRAHNEQLPAVLSRSGLPSDVKDELLSLNQSMNAELGTLKNGASFKSRILASPAMLLALAPLPLAVAFVSKDNSYSSSLVAHFTKNAVFMAGLMMNELTNARTNVDHGLNRYFVTVLANAIVAQPTFARNEHLLEQVGFGIATAVASGAATLGVFNRESIVAAFKLAKSKLSRQDTGNASIPEEDHLAVVRHFDVSEHFAQQMKVATELYKQDKSITDIMNSSLTYLGTKSSEFQARFESVDALRAGLQLAEGERKADPDFYTKLGLVALTASIGAALVMLMKSMVGKADYAADGVWCVSEMLKLAMNPEVDMQKAVQVFKEIVGLNLVMTGFLGVNKVWNFLDKGIKGYASGAAVLTAANLTLPGMVGEVAGAAAGKGLSYLTDKGKAAHQAGRAAASWAGNYVGTSRLGSAVGTLQTAIPGRIAGGQVVAGLYDRFRYLTGSHPTPAQQAAGEP.

The segment covering 1–13 (MMPSQITRSSHSS) has biased composition (polar residues). The disordered stretch occupies residues 1 to 31 (MMPSQITRSSHSSLPEVAPASGDAAGVSEQT).

The protein belongs to the HopW family.

The protein localises to the secreted. The sequence is that of Effector protein hopAE1 (hopAE1) from Pseudomonas syringae pv. syringae (strain B728a).